Consider the following 524-residue polypeptide: Probable endopeptidase p60 (524 aa).

The first 27 residues, 1–27, serve as a signal peptide directing secretion; sequence MNMKKATIAATAGIAVTAFAAPTIASA. Residues 28 to 71 form the LysM 1 domain; the sequence is STVVVEAGDTLWGIAQSKGTTVDALKKANNLTSDKIVPGQKLQV. An SH3b domain is found at 78–142; the sequence is KTEKSVSATW…VNGKYLGDAV (65 aa). The disordered stretch occupies residues 150–188; that stretch reads QEVKQETTKQTAPAAETKTEVKQSTPAPTAPKAAETKTA. The segment covering 174–188 has biased composition (low complexity); it reads TPAPTAPKAAETKTA. Residues 196–239 form the LysM 2 domain; sequence TTHTVKSGDTIWALSVKYGASVQDLMSWNNLSSSSIYVGQKIAV. The span at 272-299 shows a compositional bias: low complexity; that stretch reads NTNTTVKKEVTTQTQTNTTKAPAQAAKP. The segment at 272–313 is disordered; it reads NTNTTVKKEVTTQTQTNTTKAPAQAAKPAPAPAPAPTVNTNA. One can recognise a LysM 3 domain in the interval 314–357; it reads STYTVKSGDSLSKIANTFGTSVSKIKALNNLTSDNLQVGTVLKV. Residues 360–408 are disordered; that stretch reads TVPTTNTNNNSNTTAPTTNTSNNNTSSNTSTPSKNTNTNTNQGSSNSAS. A compositionally biased stretch (low complexity) spans 362–408; sequence PTTNTNNNSNTTAPTTNTSNNNTSSNTSTPSKNTNTNTNQGSSNSAS. The region spanning 406 to 524 is the NlpC/P60 domain; it reads SASASALIAE…GKYLVGFGRV (119 aa). Catalysis depends on Cys436, which acts as the Nucleophile. The Proton acceptor role is filled by His486. The active site involves Asn498.

This sequence belongs to the peptidase C40 family.

Its function is as follows. This major extracellular protein may be involved in the invasion of non-professional phagocytic cells by Listeria. In Listeria welshimeri, this protein is Probable endopeptidase p60 (iap).